The sequence spans 210 residues: Protein GET1 (210 aa).

Residues 1–4 are Lumenal-facing; it reads MASL. A helical membrane pass occupies residues 5–24; sequence LIIVFLSHVVTYLINTIGAT. Over 25–110 the chain is Cytoplasmic; sequence TVDNLLWLLY…SFDLTVKSVR (86 aa). The stretch at 43–97 forms a coiled coil; it reads RTAVEQRRLKGEVVQLKREMKSTSSQDEFAKWAKLRRRHDKAMEEYEAKNKALGK. A helical membrane pass occupies residues 111–131; that stretch reads FFSTTGLKFFLQFWYSKTPMF. At 132-155 the chain is on the lumenal side; sequence ELPRGWVPWQVEWVLSFPRAPLGT. A helical membrane pass occupies residues 156–172; it reads VSIQVWSGVCTTVVSLA. The Cytoplasmic portion of the chain corresponds to 173 to 210; sequence GDALGVVIQSLILKMTKRGVARTSEGRPSQPMALKKEL.

Belongs to the WRB/GET1 family. As to quaternary structure, interacts with GET3.

It localises to the endoplasmic reticulum membrane. Required for the post-translational delivery of tail-anchored (TA) proteins to the endoplasmic reticulum. Acts as a membrane receptor for soluble GET3, which recognizes and selectively binds the transmembrane domain of TA proteins in the cytosol. This chain is Protein GET1, found in Uncinocarpus reesii (strain UAMH 1704).